The sequence spans 88 residues: Large ribosomal subunit protein bL27 (88 aa).

The disordered stretch occupies residues methionine 1–lysine 24.

Belongs to the bacterial ribosomal protein bL27 family.

This chain is Large ribosomal subunit protein bL27, found in Synechococcus sp. (strain CC9605).